The sequence spans 76 residues: Bacteriocin uberolysin (76 aa).

Residues 1-6 constitute a propeptide that is removed on maturation; the sequence is MDILLE. The segment at residues 7 to 76 is a cross-link (cyclopeptide (Leu-Trp)); that stretch reads LAGYTGIASG…RNLKAQAVIW (70 aa).

Belongs to the bacteriocin class V family.

It is found in the secreted. Its function is as follows. Cyclopeptide antibiotic with bacteriolytic activity against most streptococci (except S.rattus and S.mutans), Listeria spp., enterococci and staphylococci. The sequence is that of Bacteriocin uberolysin (ublA) from Streptococcus uberis.